The primary structure comprises 151 residues: Acidic phospholipase A2 1 (151 aa).

An N-terminal signal peptide occupies residues 1–27; the sequence is MYPAHLLVLLAVCVSLLGAASIPARPL. Cystine bridges form between Cys38/Cys104, Cys54/Cys151, Cys56/Cys72, Cys71/Cys132, Cys78/Cys125, Cys88/Cys118, and Cys111/Cys123. Ca(2+) is bound by residues Tyr55, Gly57, and Gly59. The active site involves His75. Asp76 lines the Ca(2+) pocket. Asp126 is an active-site residue.

It belongs to the phospholipase A2 family. Group I subfamily. D49 sub-subfamily. Ca(2+) is required as a cofactor. As to expression, expressed by the venom gland.

The protein resides in the secreted. The enzyme catalyses a 1,2-diacyl-sn-glycero-3-phosphocholine + H2O = a 1-acyl-sn-glycero-3-phosphocholine + a fatty acid + H(+). In terms of biological role, PLA2 catalyzes the calcium-dependent hydrolysis of the 2-acyl groups in 3-sn-phosphoglycerides. The chain is Acidic phospholipase A2 1 from Tropidechis carinatus (Australian rough-scaled snake).